A 209-amino-acid chain; its full sequence is Thiamine-phosphate synthase (209 aa).

Residues 41–45 (QLREK) and Asn73 each bind 4-amino-2-methyl-5-(diphosphooxymethyl)pyrimidine. Mg(2+) contacts are provided by Asp74 and Asp93. Ser112 contributes to the 4-amino-2-methyl-5-(diphosphooxymethyl)pyrimidine binding site. Position 138 to 140 (138 to 140 (TGT)) interacts with 2-[(2R,5Z)-2-carboxy-4-methylthiazol-5(2H)-ylidene]ethyl phosphate. Lys141 contacts 4-amino-2-methyl-5-(diphosphooxymethyl)pyrimidine. 2-[(2R,5Z)-2-carboxy-4-methylthiazol-5(2H)-ylidene]ethyl phosphate-binding positions include Gly168 and 188 to 189 (VS).

Belongs to the thiamine-phosphate synthase family. The cofactor is Mg(2+).

It catalyses the reaction 2-[(2R,5Z)-2-carboxy-4-methylthiazol-5(2H)-ylidene]ethyl phosphate + 4-amino-2-methyl-5-(diphosphooxymethyl)pyrimidine + 2 H(+) = thiamine phosphate + CO2 + diphosphate. The catalysed reaction is 2-(2-carboxy-4-methylthiazol-5-yl)ethyl phosphate + 4-amino-2-methyl-5-(diphosphooxymethyl)pyrimidine + 2 H(+) = thiamine phosphate + CO2 + diphosphate. The enzyme catalyses 4-methyl-5-(2-phosphooxyethyl)-thiazole + 4-amino-2-methyl-5-(diphosphooxymethyl)pyrimidine + H(+) = thiamine phosphate + diphosphate. It functions in the pathway cofactor biosynthesis; thiamine diphosphate biosynthesis; thiamine phosphate from 4-amino-2-methyl-5-diphosphomethylpyrimidine and 4-methyl-5-(2-phosphoethyl)-thiazole: step 1/1. Functionally, condenses 4-methyl-5-(beta-hydroxyethyl)thiazole monophosphate (THZ-P) and 2-methyl-4-amino-5-hydroxymethyl pyrimidine pyrophosphate (HMP-PP) to form thiamine monophosphate (TMP). This chain is Thiamine-phosphate synthase, found in Alkaliphilus oremlandii (strain OhILAs) (Clostridium oremlandii (strain OhILAs)).